A 302-amino-acid chain; its full sequence is Formylmethanofuran--tetrahydromethanopterin formyltransferase (302 aa).

It belongs to the FTR family. In terms of assembly, homotetramer.

It localises to the cytoplasm. It catalyses the reaction N-formylmethanofuran + 5,6,7,8-tetrahydromethanopterin + H(+) = N(5)-formyl-5,6,7,8-tetrahydromethanopterin + methanofuran. It participates in one-carbon metabolism; formaldehyde degradation; formate from formaldehyde (H(4)MPT route): step 4/5. Functionally, catalyzes the transfer of a formyl group from 5-formyl tetrahydromethanopterin (5-formyl-H(4)MPT) to methanofuran (MFR) to produce formylmethanofuran (formyl-MFR) and tetrahydromethanopterin (H(4)MPT). The chain is Formylmethanofuran--tetrahydromethanopterin formyltransferase from Methylobacillus flagellatus (strain ATCC 51484 / DSM 6875 / VKM B-1610 / KT).